The primary structure comprises 355 residues: Cytoplasmic tRNA 2-thiolation protein 1 (355 aa).

The segment at 320-341 is disordered; that stretch reads GIGRPRGVNGDHNKETKKPGSV. Residues 328–337 are compositionally biased toward basic and acidic residues; sequence NGDHNKETKK.

This sequence belongs to the TtcA family. CTU1/NCS6/ATPBD3 subfamily.

It is found in the cytoplasm. The protein operates within tRNA modification; 5-methoxycarbonylmethyl-2-thiouridine-tRNA biosynthesis. Its function is as follows. Plays a central role in 2-thiolation of mcm(5)S(2)U at tRNA wobble positions of tRNA(Lys), tRNA(Glu) and tRNA(Gln). Directly binds tRNAs and probably acts by catalyzing adenylation of tRNAs, an intermediate required for 2-thiolation. It is unclear whether it acts as a sulfurtransferase that transfers sulfur from thiocarboxylated URM1 onto the uridine of tRNAs at wobble position. The sequence is that of Cytoplasmic tRNA 2-thiolation protein 1 from Arabidopsis thaliana (Mouse-ear cress).